The chain runs to 189 residues: Apolipoprotein D (189 aa).

Residues 1–20 (MGMMLLLLSMLAGLVAEAEG) form the signal peptide. Position 21 is a pyrrolidone carboxylic acid (Q21). 2 cysteine pairs are disulfide-bonded: C28-C134 and C61-C185. 2 N-linked (GlcNAc...) asparagine glycosylation sites follow: N65 and N98.

It belongs to the calycin superfamily. Lipocalin family. Homodimer.

It localises to the secreted. Functionally, APOD occurs in the macromolecular complex with lecithin-transport and binding of bilin. Appears to be able to transport a variety of ligands in a number of different contexts. The protein is Apolipoprotein D (APOD) of Cavia porcellus (Guinea pig).